A 693-amino-acid polypeptide reads, in one-letter code: Heat shock protein homolog SSE1 (693 aa).

An N-acetylserine modification is found at S2. A Glycyl lysine isopeptide (Lys-Gly) (interchain with G-Cter in ubiquitin) cross-link involves residue K195. T242 carries the phosphothreonine modification. Positions 653–693 (IRSKQEASQMAAMAEKLAAQRKAEAEKKEEKKDTEGDVDMD) are disordered. S660 is subject to Phosphoserine. Positions 673–687 (RKAEAEKKEEKKDTE) are enriched in basic and acidic residues.

The protein belongs to the heat shock protein 70 family.

Its subcellular location is the cytoplasm. Its function is as follows. Has a calcium-dependent calmodulin-binding activity. Required for normal growth at various temperatures. The chain is Heat shock protein homolog SSE1 (SSE1) from Saccharomyces cerevisiae (strain ATCC 204508 / S288c) (Baker's yeast).